A 685-amino-acid polypeptide reads, in one-letter code: Galactocerebrosidase (685 aa).

Positions 1–42 are cleaved as a signal peptide; the sequence is MAEWLLSASWQRRAKAMTAAAGSAGRAAVPLLLCALLAPGGA. Thr109 contacts substrate. The N-linked (GlcNAc...) asparagine glycan is linked to Asn143. Substrate-binding residues include Trp151 and Asn197. Glu198 acts as the Proton donor/acceptor in catalysis. The active-site Nucleophile is Glu274. Cys287 and Cys394 are oxidised to a cystine. Asn379 carries N-linked (GlcNAc...) asparagine glycosylation. Residue Arg396 coordinates substrate. Residues Asn403, Asn556, Asn559, and Asn602 are each glycosylated (N-linked (GlcNAc...) asparagine).

The protein belongs to the glycosyl hydrolase 59 family. In terms of tissue distribution, detected in urine. Detected in testis, brain and placenta (at protein level). Detected in kidney and liver.

The protein localises to the lysosome. It carries out the reaction a beta-D-galactosyl-(1&lt;-&gt;1')-N-acylsphing-4-enine + H2O = an N-acylsphing-4-enine + D-galactose. It catalyses the reaction beta-D-galactosyl-(1&lt;-&gt;1)-sphing-4-enine + H2O = sphing-4-enine + D-galactose. The enzyme catalyses a D-galactosylceramide + H2O = an N-acyl-sphingoid base + D-galactose. Hydrolyzes the galactose ester bonds of glycolipids such as galactosylceramide and galactosylsphingosine. Enzyme with very low activity responsible for the lysosomal catabolism of galactosylceramide, a major lipid in myelin, kidney and epithelial cells of small intestine and colon. The sequence is that of Galactocerebrosidase from Homo sapiens (Human).